Here is a 493-residue protein sequence, read N- to C-terminus: Ribose import ATP-binding protein RbsA (493 aa).

2 ABC transporter domains span residues 5–241 (LKIS…VGRR) and 252–491 (EKGE…AAAI). 37 to 44 (GENGAGKS) contributes to the ATP binding site.

The protein belongs to the ABC transporter superfamily. Ribose importer (TC 3.A.1.2.1) family. The complex is composed of an ATP-binding protein (RbsA), two transmembrane proteins (RbsC) and a solute-binding protein (RbsB).

It localises to the cell inner membrane. It carries out the reaction D-ribose(out) + ATP + H2O = D-ribose(in) + ADP + phosphate + H(+). In terms of biological role, part of the ABC transporter complex RbsABC involved in ribose import. Responsible for energy coupling to the transport system. The polypeptide is Ribose import ATP-binding protein RbsA (Haemophilus influenzae (strain 86-028NP)).